The chain runs to 474 residues: tRNA-2-methylthio-N(6)-dimethylallyladenosine synthase (474 aa).

Positions 21 to 138 (ERVYVETQGC…LPQMLARRRS (118 aa)) constitute an MTTase N-terminal domain. C30, C67, C101, C175, C179, and C182 together coordinate [4Fe-4S] cluster. The 235-residue stretch at 161-395 (RAEGPTAYVS…ARLHEQQSAA (235 aa)) folds into the Radical SAM core domain. The region spanning 397–460 (RALLGTRQSV…THSLRGRVVS (64 aa)) is the TRAM domain.

Belongs to the methylthiotransferase family. MiaB subfamily. In terms of assembly, monomer. [4Fe-4S] cluster serves as cofactor.

The protein resides in the cytoplasm. The catalysed reaction is N(6)-dimethylallyladenosine(37) in tRNA + (sulfur carrier)-SH + AH2 + 2 S-adenosyl-L-methionine = 2-methylsulfanyl-N(6)-dimethylallyladenosine(37) in tRNA + (sulfur carrier)-H + 5'-deoxyadenosine + L-methionine + A + S-adenosyl-L-homocysteine + 2 H(+). Catalyzes the methylthiolation of N6-(dimethylallyl)adenosine (i(6)A), leading to the formation of 2-methylthio-N6-(dimethylallyl)adenosine (ms(2)i(6)A) at position 37 in tRNAs that read codons beginning with uridine. This Halorhodospira halophila (strain DSM 244 / SL1) (Ectothiorhodospira halophila (strain DSM 244 / SL1)) protein is tRNA-2-methylthio-N(6)-dimethylallyladenosine synthase.